The following is a 261-amino-acid chain: Syntaxin-7 (261 aa).

Ser-2 carries the N-acetylserine modification. Residues 2–238 lie on the Cytoplasmic side of the membrane; the sequence is SYTPGVGGDP…DYQRKSRKTL (237 aa). The residue at position 4 (Thr-4) is a Phosphothreonine. A Phosphoserine modification is found at Ser-45. The stretch at 47-69 forms a coiled coil; sequence ELRQQLQQKQQYTNQLTKETDKY. Ser-75 bears the Phosphoserine mark. At Thr-79 the chain carries Phosphothreonine. A phosphoserine mark is found at Ser-125, Ser-126, Ser-129, and Ser-205. The interval 129 to 148 is disordered; sequence SGSFPEDSSKERNLVSWESQ. Residues 165–227 form the t-SNARE coiled-coil homology domain; it reads LRLIHERESS…QQANQQLSRA (63 aa). The chain crosses the membrane as a helical; Anchor for type IV membrane protein span at residues 239-259; it reads CIIILILVIGVVIIGLIIWGL. Over 260–261 the chain is Vesicular; it reads NR.

It belongs to the syntaxin family. Forms a SNARE complex with VTI1B, STX8 and VAMP8 which functions in the homotypic fusion of late endosomes. Component of the SNARE complex composed of STX7, STX8, VAMP7 and VTI1B that is required for heterotypic fusion of late endosomes with lysosomes. Interacts with VPS11, VPS16 and VPS18. Interacts with VPS33A. Interacts with TPC1.

The protein localises to the early endosome membrane. In terms of biological role, may be involved in protein trafficking from the plasma membrane to the early endosome (EE) as well as in homotypic fusion of endocytic organelles. Mediates the endocytic trafficking from early endosomes to late endosomes and lysosomes. The sequence is that of Syntaxin-7 (STX7) from Pongo abelii (Sumatran orangutan).